Reading from the N-terminus, the 329-residue chain is Microtubule-associated protein RP/EB family member 1C (329 aa).

One can recognise a Calponin-homology (CH) domain in the interval 13 to 115; the sequence is FVGRSEILAW…FMQWMKKYCD (103 aa). The span at 130 to 141 shows a compositional bias: basic and acidic residues; that stretch reads REASKGGKEATK. The tract at residues 130–203 is disordered; it reads REASKGGKEA…SAKQSKPVPA (74 aa). Positions 174–185 are enriched in low complexity; sequence SNNTGTHHSSTG. The EB1 C-terminal domain occupies 193 to 263; the sequence is PSAKQSKPVP…LYAADGEDVG (71 aa). The tract at residues 289 to 311 is required for nuclear localization; the sequence is KRKLIVNLDVDVAAITTLSPRQR.

It belongs to the MAPRE family. In terms of assembly, homodimer. Highly expressed in the root and shoot meristems, in guard cells of leaf stomata, pollen grains and pollen tubes.

It localises to the nucleus. Its subcellular location is the cytoplasm. The protein resides in the cytoskeleton. It is found in the spindle. The protein localises to the phragmoplast. In terms of biological role, plant-specific EB1 subtype that functions preferentially at early stages of plant mitosis by regulating spindle positioning and chromosome segregation. Accumulates in the prophase nucleus and is required to maintain spindle bipolarity during premetaphase and/or metaphase and for efficient segregation of chromosomes at anaphase. May play a role in the dynamics of microtubule network in elongating pollen tubes. The sequence is that of Microtubule-associated protein RP/EB family member 1C (EB1C) from Arabidopsis thaliana (Mouse-ear cress).